Here is a 234-residue protein sequence, read N- to C-terminus: Probable transcriptional regulatory protein MYCGA1330 (234 aa).

This sequence belongs to the TACO1 family.

The protein localises to the cytoplasm. The sequence is that of Probable transcriptional regulatory protein MYCGA1330 from Mycoplasmoides gallisepticum (strain R(low / passage 15 / clone 2)) (Mycoplasma gallisepticum).